We begin with the raw amino-acid sequence, 279 residues long: Phage-like element PBSX protein XepA (279 aa).

This sequence to B.subtilis YqxG/YqdC.

Its function is as follows. Not known; does not seem to be involved in host cell lysis. The polypeptide is Phage-like element PBSX protein XepA (xepA) (Bacillus subtilis (strain 168)).